A 1259-amino-acid chain; its full sequence is Bud site selection protein 4 homolog (1259 aa).

Disordered stretches follow at residues 185–416 (YDRG…MVKP), 428–455 (LHLG…DAMK), and 862–902 (SGLG…KKRT). The segment covering 247–267 (ATDKRSLTDKTVPDNRGENER) has biased composition (basic and acidic residues). The segment covering 277–289 (RNPSIETGTTDEY) has biased composition (polar residues). Composition is skewed to basic and acidic residues over residues 305 to 324 (DDSK…KPQR) and 368 to 391 (IRDR…DHEL). Low complexity predominate over residues 397 to 411 (SARTNSSASGNSSDS). The PH domain maps to 1128 to 1239 (AIAMEGFMWQ…WIEKLRKVIE (112 aa)).

Belongs to the BUD4 family.

It is found in the cell septum. Functionally, may be involved in the septin organization at the site of septation. The polypeptide is Bud site selection protein 4 homolog (BUD4) (Eremothecium gossypii (strain ATCC 10895 / CBS 109.51 / FGSC 9923 / NRRL Y-1056) (Yeast)).